The chain runs to 532 residues: MWDYVKLVALGVVAAIAAYAASQARDLPYMVNMVEVALAAVIALIWVLRTMGDPKPSKDEYFDGVIRAGVIATTFWGIVGFLVAVVIAFQLAFPALNLEFGNGMLNFGRLRPLHTSAVIFAFGGNALIASAFYVVQRTSAARLFGGTALGWFVFWGWQLIIVTAATSYLLGGSQGKEYAELNWHLDILVAVVWVAYLIAFLGTIFKRKEPHIYVANWFYLSFIVTIAMLHIVNNLAVPVSIFGTKSVQLMAGVQDAMTQWWYGHNAVGFFLTAGFLGMMYYFVPKQAERPVYSYKLSIVHFWALIFLYIWAGPHHLHYTALPDWASTLGMVMSVILWMPSWGGMINGLMTLSGAWDKLRTDPVIRMMVVSIGFYGMSTFEGPMMSIKAVNSLSHYTDWTIGHVHSGALGWNGMITFGMLYFLTPRLWGRSGLYSLKLVSWHFWLATIGIVLYASAMWVTGIMEGLMWREVDAQGFLVNAFADTVAAKFPMYVVRGVGGVLYLLGGLIMAYNLWATVAKQPKTANLAVAVPAE.

A run of 3 helical transmembrane segments spans residues 1–21, 27–47, and 69–89; these read MWDYVKLVALGVVAAIAAYAA, LPYMVNMVEVALAAVIALIWV, and GVIATTFWGIVGFLVAVVIAF. Histidine 114 contacts heme b. Transmembrane regions (helical) follow at residues 115-135, 143-163, 185-205, 212-232, 263-283, 296-316, 328-348, and 366-386; these read TSAVIFAFGGNALIASAFYVV, LFGGTALGWFVFWGWQLIIVT, LDILVAVVWVAYLIAFLGTIF, IYVANWFYLSFIVTIAMLHIV, GHNAVGFFLTAGFLGMMYYFV, LSIVHFWALIFLYIWAGPHHL, LGMVMSVILWMPSWGGMINGL, and MMVVSIGFYGMSTFEGPMMSI. The Cu cation site is built by histidine 264, histidine 314, and histidine 315. Positions 402 and 404 each coordinate heme b. Transmembrane regions (helical) follow at residues 403–423, 442–462, and 496–516; these read VHSGALGWNGMITFGMLYFLT, FWLATIGIVLYASAMWVTGIM, and VGGVLYLLGGLIMAYNLWATV.

The protein belongs to the heme-copper respiratory oxidase family. The cofactor is Cu(2+). Requires heme b as cofactor.

It localises to the cell membrane. The enzyme catalyses 4 Fe(II)-[cytochrome c] + O2 + 8 H(+)(in) = 4 Fe(III)-[cytochrome c] + 2 H2O + 4 H(+)(out). The protein operates within energy metabolism; oxidative phosphorylation. Cytochrome c oxidase is the component of the respiratory chain that catalyzes the reduction of oxygen to water. Subunits 1-3 form the functional core of the enzyme complex. Co I is the catalytic subunit of the enzyme. Electrons originating in cytochrome c are transferred via the copper A center of subunit 2 and heme a of subunit 1 to the bimetallic center formed by heme a3 and copper B. This cytochrome c oxidase shows proton pump activity across the membrane in addition to the electron transfer. The chain is Cytochrome c oxidase subunit 1 (ctaD) from Rhodobacter capsulatus (Rhodopseudomonas capsulata).